The sequence spans 183 residues: Nucleoside triphosphate pyrophosphatase (183 aa).

The Proton acceptor role is filled by aspartate 71.

It belongs to the Maf family. It depends on a divalent metal cation as a cofactor.

It localises to the cytoplasm. It carries out the reaction a ribonucleoside 5'-triphosphate + H2O = a ribonucleoside 5'-phosphate + diphosphate + H(+). It catalyses the reaction a 2'-deoxyribonucleoside 5'-triphosphate + H2O = a 2'-deoxyribonucleoside 5'-phosphate + diphosphate + H(+). In terms of biological role, nucleoside triphosphate pyrophosphatase. May have a dual role in cell division arrest and in preventing the incorporation of modified nucleotides into cellular nucleic acids. This is Nucleoside triphosphate pyrophosphatase from Campylobacter jejuni subsp. jejuni serotype O:2 (strain ATCC 700819 / NCTC 11168).